The following is an 89-amino-acid chain: Small ribosomal subunit protein uS15 (89 aa).

Belongs to the universal ribosomal protein uS15 family. In terms of assembly, part of the 30S ribosomal subunit. Forms a bridge to the 50S subunit in the 70S ribosome, contacting the 23S rRNA.

In terms of biological role, one of the primary rRNA binding proteins, it binds directly to 16S rRNA where it helps nucleate assembly of the platform of the 30S subunit by binding and bridging several RNA helices of the 16S rRNA. Forms an intersubunit bridge (bridge B4) with the 23S rRNA of the 50S subunit in the ribosome. The sequence is that of Small ribosomal subunit protein uS15 from Cupriavidus metallidurans (strain ATCC 43123 / DSM 2839 / NBRC 102507 / CH34) (Ralstonia metallidurans).